The sequence spans 372 residues: Envelope phospholipase OPG057 (372 aa).

Positions 153-156 (YPPL) match the YPPL motif. S-palmitoyl cysteine; by host attachment occurs at residues C185 and C186. One can recognise a PLD phosphodiesterase domain in the interval 307–334 (FTIQNNTKLLIVDDEYVHITSANFDGTH).

It belongs to the orthopoxvirus OPG057 family. As to quaternary structure, interacts with protein OPG190. Palmitoylated. Attachment of the palmitate moiety is essential for correct intracellular targeting and protein function.

Its subcellular location is the virion membrane. It localises to the host Golgi apparatus. The protein resides in the host trans-Golgi network. The protein localises to the host endoplasmic reticulum membrane. It catalyses the reaction a 1,2-diacyl-sn-glycero-3-phosphocholine + H2O = a 1,2-diacyl-sn-glycero-3-phosphate + choline + H(+). Major envelope protein that plays a role in the biogenesis of the viral double membrane and in egress of virus from the host cell. Produces the wrapped form of virus that is required for cell-to-cell spread. Acts as a lipase with broad specificity including phospholipase C, phospholipase A, and triacylglycerol lipase activities. In Vaccinia virus (strain Copenhagen) (VACV), this protein is Envelope phospholipase OPG057 (OPG057).